A 202-amino-acid polypeptide reads, in one-letter code: Sterile alpha motif domain-containing protein 10 (202 aa).

One can recognise an SAM domain in the interval 118–184; that stretch reads WSQQDVCKWL…LQQVLRLQVR (67 aa).

The polypeptide is Sterile alpha motif domain-containing protein 10 (SAMD10) (Homo sapiens (Human)).